Consider the following 329-residue polypeptide: Ribonucleoside-diphosphate reductase small chain (329 aa).

Residues Asp-75, Glu-106, and His-109 each coordinate Fe cation. Residue Tyr-113 is part of the active site. Residues Glu-168, Glu-202, and His-205 each coordinate Fe cation.

Belongs to the ribonucleoside diphosphate reductase small chain family. In terms of assembly, heterodimer of a large and a small chain. Fe cation serves as cofactor.

The protein resides in the cytoplasm. The enzyme catalyses a 2'-deoxyribonucleoside 5'-diphosphate + [thioredoxin]-disulfide + H2O = a ribonucleoside 5'-diphosphate + [thioredoxin]-dithiol. In terms of biological role, provides the precursors necessary for DNA synthesis. Catalyzes the biosynthesis of deoxyribonucleotides from the corresponding ribonucleotides. In Nicotiana tabacum (Common tobacco), this protein is Ribonucleoside-diphosphate reductase small chain.